A 239-amino-acid polypeptide reads, in one-letter code: Small ribosomal subunit protein uS2c (239 aa).

The protein belongs to the universal ribosomal protein uS2 family.

It is found in the plastid. The protein is Small ribosomal subunit protein uS2c (rps2) of Aneura mirabilis (Parasitic liverwort).